The sequence spans 478 residues: Cysteine--tRNA ligase (478 aa).

Residue C29 participates in Zn(2+) binding. The 'HIGH' region motif lies at 31 to 41; that stretch reads ATVQSIPHIGH. Zn(2+) contacts are provided by C207, H232, and E236. The 'KMSKS' region signature appears at 263-267; it reads KMSKS. K266 is a binding site for ATP.

The protein belongs to the class-I aminoacyl-tRNA synthetase family. As to quaternary structure, monomer. Zn(2+) is required as a cofactor.

The protein localises to the cytoplasm. The enzyme catalyses tRNA(Cys) + L-cysteine + ATP = L-cysteinyl-tRNA(Cys) + AMP + diphosphate. In Corynebacterium jeikeium (strain K411), this protein is Cysteine--tRNA ligase.